Reading from the N-terminus, the 170-residue chain is Large ribosomal subunit protein uL10 (170 aa).

It belongs to the universal ribosomal protein uL10 family. In terms of assembly, part of the ribosomal stalk of the 50S ribosomal subunit. The N-terminus interacts with L11 and the large rRNA to form the base of the stalk. The C-terminus forms an elongated spine to which L12 dimers bind in a sequential fashion forming a multimeric L10(L12)X complex.

Forms part of the ribosomal stalk, playing a central role in the interaction of the ribosome with GTP-bound translation factors. This is Large ribosomal subunit protein uL10 from Chlamydia caviae (strain ATCC VR-813 / DSM 19441 / 03DC25 / GPIC) (Chlamydophila caviae).